The sequence spans 299 residues: Syntenin-1 (299 aa).

Position 2 is an N-acetylserine (Ser-2). The segment at 2-103 (SLYPSLEDLK…VAPVTGNDAG (102 aa)) is interaction with PDCD6IP. Short sequence motifs (LYPX(n)L motif) lie at residues 3–7 (LYPSL), 46–50 (LYPKL), and 50–54 (LYPEL). A Phosphoserine modification is found at Ser-6. Residue Tyr-47 is modified to Phosphotyrosine. PDZ domains are found at residues 115–194 (EVIL…IRDR) and 199–273 (TVTM…IMPT). 251 to 252 (KD) is a binding site for a 1,2-diacyl-sn-glycero-3-phospho-(1D-myo-inositol-4,5-bisphosphate).

Monomer and homodimer. Interacts with SDC1, SDC2, SDC3, SDC4, NRXN2, EPHA7, EPHB1, NF2 isoform 1, TGFA, IL5RA, NFASC, SDCBP2 and PTPRJ. Interacts with PDCD6IP. Forms a complex with PDCD6IP and SDC2. Interacts (via C-terminus) with TGFBR1. Binds to FZD7; this interaction is increased by inositol trisphosphate (IP3). Interacts with SMO. In terms of processing, phosphorylated on tyrosine residues.

The protein resides in the cell junction. Its subcellular location is the focal adhesion. The protein localises to the adherens junction. It localises to the cell membrane. It is found in the endoplasmic reticulum membrane. The protein resides in the nucleus. Its subcellular location is the melanosome. The protein localises to the cytoplasm. It localises to the cytosol. It is found in the cytoskeleton. The protein resides in the secreted. Its subcellular location is the extracellular exosome. The protein localises to the membrane raft. In terms of biological role, multifunctional adapter protein involved in diverse array of functions including trafficking of transmembrane proteins, neuro and immunomodulation, exosome biogenesis, and tumorigenesis. Positively regulates TGFB1-mediated SMAD2/3 activation and TGFB1-induced epithelial-to-mesenchymal transition (EMT) and cell migration in various cell types. May increase TGFB1 signaling by enhancing cell-surface expression of TGFR1 by preventing the interaction between TGFR1 and CAV1 and subsequent CAV1-dependent internalization and degradation of TGFR1. In concert with SDC1/4 and PDCD6IP, regulates exosome biogenesis. Regulates migration, growth, proliferation, and cell cycle progression in a variety of cancer types. In adherens junctions may function to couple syndecans to cytoskeletal proteins or signaling components. Seems to couple transcription factor SOX4 to the IL-5 receptor (IL5RA). May also play a role in vesicular trafficking. Seems to be required for the targeting of TGFA to the cell surface in the early secretory pathway. This chain is Syntenin-1 (Sdcbp), found in Mus musculus (Mouse).